The following is a 281-amino-acid chain: MKTETTIQGLTASLNPARTTRKIIGFVPTMGNLHQGHLNLVREAKKLCDIVVVSIFVNPIQFGEGEDFENYPRTLEQDSHLLADVGCDIIFAPSVEQMYGKHPRLTNISVADITDDLCGQSRPGHFDGVAVVVTKLFNIVQPNVAFFGQKDYQQLAVIRQLVQDLNLPIDIIGVPIARDHDGLALSSRNGYLSEAERQIAPTIYQSLKLAEQQLHQGVELVDVLDELKFRLTAAGFVVDYVEARQPNLQPIAQFDRDLVLFVAAKLGKTRLIDNLQVKLKA.

ATP is bound at residue 30-37 (MGNLHQGH). His37 functions as the Proton donor in the catalytic mechanism. Residue Gln61 participates in (R)-pantoate binding. Gln61 contacts beta-alanine. 148–151 (GQKD) contributes to the ATP binding site. Gln154 is a binding site for (R)-pantoate. Residues Ala177 and 185–188 (LSSR) contribute to the ATP site.

It belongs to the pantothenate synthetase family. In terms of assembly, homodimer.

The protein localises to the cytoplasm. It catalyses the reaction (R)-pantoate + beta-alanine + ATP = (R)-pantothenate + AMP + diphosphate + H(+). The protein operates within cofactor biosynthesis; (R)-pantothenate biosynthesis; (R)-pantothenate from (R)-pantoate and beta-alanine: step 1/1. In terms of biological role, catalyzes the condensation of pantoate with beta-alanine in an ATP-dependent reaction via a pantoyl-adenylate intermediate. The protein is Pantothenate synthetase of Acinetobacter baylyi (strain ATCC 33305 / BD413 / ADP1).